Reading from the N-terminus, the 77-residue chain is Vacuolar ATPase assembly integral membrane protein VMA21 (77 aa).

At 1-8 (MAVDVPTS) the chain is on the cytoplasmic side. The chain crosses the membrane as a helical span at residues 9 to 29 (VIVKLMFFTLAMVSFPVLTFF). Over 30-41 (VSQQYTSNTLVN) the chain is Lumenal. A helical transmembrane segment spans residues 42 to 62 (GGLAALAANVVLFAYVIMAFS). Residues 63-77 (EDVPQSDGKESKKQQ) lie on the Cytoplasmic side of the membrane. The Prevents secretion from ER motif lies at 74 to 77 (KKQQ).

It belongs to the VMA21 family.

It localises to the endoplasmic reticulum membrane. The protein localises to the endoplasmic reticulum-Golgi intermediate compartment membrane. Its subcellular location is the cytoplasmic vesicle. The protein resides in the COPII-coated vesicle membrane. Its function is as follows. Required for the assembly of the V0 complex of the vacuolar ATPase (V-ATPase) in the endoplasmic reticulum. In Eremothecium gossypii (strain ATCC 10895 / CBS 109.51 / FGSC 9923 / NRRL Y-1056) (Yeast), this protein is Vacuolar ATPase assembly integral membrane protein VMA21.